A 980-amino-acid chain; its full sequence is SLIT and NTRK-like protein 3 (980 aa).

An N-terminal signal peptide occupies residues 1-27 (MMKPSIAEMLHRGRMLWIILLSTIALG). At 30–655 (TPIPLIEDSE…SPPGGPVPLS (626 aa)) the chain is on the extracellular side. N-linked (GlcNAc...) asparagine glycosylation is present at Asn-69. 6 LRR repeats span residues 79–100 (RPFK…SFLH), 103–124 (NAVS…AFNG), 127–148 (ILKR…TFLG), 151–172 (SLEY…AFRN), 175–196 (KLRV…LFKA), and 198–219 (SLTH…GMLD). The region spanning 233 to 284 (NPWNCTCEIVQLKSWLERIPYTALVGDITCETPFHFHGKDLREIKKTELCPL) is the LRRCT 1 domain. The disordered stretch occupies residues 326–361 (EYKSSNKQPKPTKQPRTPRPPSTSQALYPGPNQPPI). In terms of domain architecture, LRRNT spans 365 to 407 (QTRPPIPIICPTGCTCNLHINDLGLTVNCKERGFNNISELLPR). LRR repeat units follow at residues 410-431 (NAKK…DFWN), 434-455 (SLDL…AFIN), 458-479 (NLKS…MFRG), 482-503 (SLHY…AFSL), 506-527 (NLKL…AFAG), and 529-550 (SLAR…GVLE). Residues 563–614 (NPWDCTCDLVPFKQWIETISSVSVVGDVLCRTPENLTHRDVRTIELEVLCPE) form the LRRCT 2 domain. A glycan (N-linked (GlcNAc...) asparagine) is linked at Asn-597. Residues 622-644 (GPSPPQPGDYHPNGGPTSASPYE) are disordered. The helical transmembrane segment at 656-676 (VLILSLLVLFFSAVFVAAGLF) threads the bilayer. At 677–980 (AYVLRRRRKK…EVLEKTAYRF (304 aa)) the chain is on the cytoplasmic side. Disordered stretches follow at residues 709–735 (LFED…EKAP) and 762–785 (EEEV…GTQP). Positions 715–725 (GNSGGSGGGGR) are enriched in gly residues.

The protein belongs to the SLITRK family. As to expression, broadly expressed in embryonic brain with highest expression in cortical plate, pyramidal cell layer of the hippocampus, thalamus and hypothalamus.

The protein localises to the membrane. Its function is as follows. Suppresses neurite outgrowth. The sequence is that of SLIT and NTRK-like protein 3 (Slitrk3) from Mus musculus (Mouse).